We begin with the raw amino-acid sequence, 61 residues long: Small ribosomal subunit protein uS14 (61 aa).

Zn(2+) contacts are provided by cysteine 24, cysteine 27, cysteine 40, and cysteine 43.

Belongs to the universal ribosomal protein uS14 family. Zinc-binding uS14 subfamily. As to quaternary structure, part of the 30S ribosomal subunit. Contacts proteins S3 and S10. Zn(2+) serves as cofactor.

Functionally, binds 16S rRNA, required for the assembly of 30S particles and may also be responsible for determining the conformation of the 16S rRNA at the A site. The polypeptide is Small ribosomal subunit protein uS14 (Thermobifida fusca (strain YX)).